The chain runs to 1041 residues: MDWLLFRNICLLILFMVVLGVNSEFIVEVKELDIENGTTTWQTVRRQKREWIKFAAACREGEDNSKRNPIARIRSDCEVSQRITYRISGAGIDRPPYGVFTINPRTGEINITSVVDREITPLFLIHCRALNSRGEDLERPLELRVKVMDVNDNPPVFTQNVYTANIEENSDANALVVKLSATDADEDNHLNSKIAYKIISQEPAGAPMFMVNRYTGEVRTMSNFLDREQHSMYNLLVRGSDRDGATDGLSSECDCRIKILDVNDNFPILEKTSYSASIEENCLSSELIRLQAIDLDEEGTDNWLAQYSILSGNDGNWFEIQTDPKTNEGILKVVKMLDYEQEPNIYLSIGVRNQAEFHHSVASQFQMHSTPVRIQVVNVREGPTFSPSSMTFSLRGGMRGASLMNYVLGTYTAIDMDTGNPATNVRYVIGHDAGSWLKVDSRTGEIQFSREFDMKSKYITDGIYAAQILAIDDGSGRTATGTICIEIPDANDYCPVIYAESRSVCTHASSVRIYVNDHSFGSPFTFCVVDESPDIANIWDIRSINGTSAILMTEQTLSPGPYQIPILVKDSHNRACELPQTVLLDACFCDDHHVCLHSSTTGIYTGDITWVTDDMYGTVTDDGVRQSNVGLGPAGIGMIILGLLLLLLSPLLLLMCCCKRRQPEGLGTRFAPVPEGGEGVMQPWRIEGAHPEDRDVSNICVPMTASNTQDRIDSSEIYTNTYAGGGTVEGGVSGVELNTGVGTATGMVAAGATGTLRKRSSTIGTLREYQDTGMNMAFLDSYFSEKAYAYADEDEGRPANDCLLIYDHEGAGSPVGSIGCCSWIVDDLDESYIETLDPKFRTLAEICLDTEIEPFPSHQACIPISTDLPLLGPNYFVNESSGMTLSEAEFQAEMAAASEPMIHGDIIVTETYTTSDPCVQPTTIVFDSQIPPNVVVTETVMAPVYDVQGNICVPAEIANTHNVYYAERVVASPGIPDMGNSNISDACIGPVMSGGILVGPEIQVTQMMSPDIHISQTTGSTSPMTSQHRVTRYSNMHYSRQ.

The N-terminal stretch at 1-23 (MDWLLFRNICLLILFMVVLGVNS) is a signal peptide. Residues 24–49 (EFIVEVKELDIENGTTTWQTVRRQKR) constitute a propeptide that is removed on maturation. 4 Cadherin domains span residues 50-157 (EWIK…PPVF), 158-269 (TQNV…FPIL), 270-385 (EKTS…GPTF), and 389-497 (SMTF…CPVI). The Extracellular portion of the chain corresponds to 50 to 634 (EWIKFAAACR…RQSNVGLGPA (585 aa)). An N-linked (GlcNAc...) asparagine glycan is attached at Asn-110. Asn-545 carries an N-linked (GlcNAc...) asparagine glycan. A helical transmembrane segment spans residues 635-655 (GIGMIILGLLLLLLSPLLLLM). Over 656–1041 (CCCKRRQPEG…RYSNMHYSRQ (386 aa)) the chain is Cytoplasmic. 2 Desmoglein repeat repeats span residues 884–910 (TLSE…IVTE) and 911–941 (TYTT…ETVM). The segment at 1014–1041 (ISQTTGSTSPMTSQHRVTRYSNMHYSRQ) is disordered.

As to quaternary structure, interacts with JUP. Strongly expressed in the skin; during the anagen stage of hair follicles in the matrix, precortex and inner rooth sheath.

It is found in the cell membrane. Its subcellular location is the cell junction. It localises to the desmosome. Functionally, a component of desmosome cell-cell junctions which are required for positive regulation of cellular adhesion. Coordinates the transition from proliferation to differentiation in hair follicle keratinocytes. Plays a role in moderating lymphocyte migration to inflamed skin and maintaining homeostasis of the epidermal inflammatory response. This Mus musculus (Mouse) protein is Desmoglein-4 (Dsg4).